The primary structure comprises 145 residues: Putative pre-16S rRNA nuclease (145 aa).

The protein belongs to the YqgF nuclease family.

It localises to the cytoplasm. In terms of biological role, could be a nuclease involved in processing of the 5'-end of pre-16S rRNA. This chain is Putative pre-16S rRNA nuclease, found in Opitutus terrae (strain DSM 11246 / JCM 15787 / PB90-1).